We begin with the raw amino-acid sequence, 312 residues long: MIKRRGNVEIRVYYESVRTLRSRSHLKPSDRQQSPGHRVFPGSPGFRDHPENLGNPEYRELPETPGYRVTPGIHDNPGLPGSPGLPGSPGLPGSPGPHAPPANHVRLAGLYSPGKYAPLASPDPFSPQHGAYARARVGIHTAVRVPPTGSPTHTHLRQDPGDEPTSDDSGLYPLDARALAHLVMLPADHRAFFRTVVEVSRMCAANVRDPPPPATGAMLGRHARLVHTQWLRANQETSPLWPWRTAAINFITTMAPRVQTHRHMHDLLMACAFWCCLTHASTCSYAGLYSTHCLHLFGAFGCGDPALTPPLC.

2 disordered regions span residues 20–106 (LRSR…NHVR) and 143–170 (VRVP…DDSG). The segment covering 46 to 62 (FRDHPENLGNPEYRELP) has biased composition (basic and acidic residues). Residues 271–283 (CAFWCCLTHASTC) fold into a zinc finger.

This sequence belongs to the herpesviridae US10 family. Phosphorylated.

The protein resides in the virion tegument. The protein localises to the host nucleus matrix. This Human herpesvirus 1 (strain 17) (HHV-1) protein is Virion protein US10 (US10).